A 417-amino-acid chain; its full sequence is Actin-related protein 10 (417 aa).

It belongs to the actin family. In terms of assembly, subunit of dynactin, a multiprotein complex part of a tripartite complex with dynein and a adapter, such as BICDL1, BICD2 or HOOK3. The dynactin complex is built around ACTR1A/ACTB filament and consists of an actin-related filament composed of a shoulder domain, a pointed end and a barbed end. Its length is defined by its flexible shoulder domain. The soulder is composed of 2 DCTN1 subunits, 4 DCTN2 and 2 DCTN3. The 4 DCNT2 (via N-terminus) bind the ACTR1A filament and act as molecular rulers to determine the length. The pointed end is important for binding dynein-dynactin cargo adapters. Consists of 4 subunits: ACTR10, DCNT4, DCTN5 and DCTN6. The barbed end is composed of a CAPZA1:CAPZB heterodimers, which binds ACTR1A/ACTB filament and dynactin and stabilizes dynactin.

It localises to the cytoplasm. The protein localises to the cytoskeleton. Functionally, part of the dynactin complex that activates the molecular motor dynein for ultra-processive transport along microtubules. The protein is Actin-related protein 10 (ACTR10) of Sus scrofa (Pig).